We begin with the raw amino-acid sequence, 757 residues long: Zinc finger CCCH domain-containing protein 5 (757 aa).

The interval 1-127 (MEQANEKEEE…REEEERRWKD (127 aa)) is disordered. The segment covering 13–35 (HEEAAGEKESFEESKEKAAEMSR) has biased composition (basic and acidic residues). Positions 36-50 (KEKRKAMKKLKRKQV) are enriched in basic residues. Residues 51 to 127 (RKEIAAKERE…REEEERRWKD (77 aa)) show a composition bias toward basic and acidic residues. The segment at 240–268 (EQDKAHCPFHLKTGACRFGQRCSRVHFYP) adopts a C3H1-type 1 zinc-finger fold. The RRM domain maps to 295–372 (YTDEEAELCY…KQVNCEFVNI (78 aa)). A C3H1-type 2 zinc finger spans residues 374 to 404 (RWKVAICGEYMKSRLKTCSRGSACNFIHCFR). Residues 441-757 (HESSGSLNDS…EEEIERWRPV (317 aa)) form a disordered region. The span at 444 to 455 (SGSLNDSISDLS) shows a compositional bias: polar residues. Positions 487-546 (YHGDTQDSTREDKLRRHAENCHDGDDSPSRDGSLEREMYKERRYAKDTLHRDSRWSEHSP) are enriched in basic and acidic residues. Composition is skewed to basic residues over residues 547–557 (GHRVGRKRIHG) and 600–609 (KTHRSSRKHS). Basic and acidic residues-rich tracts occupy residues 610–634 (REGS…DKSH), 644–672 (RSSS…KRSV), and 681–721 (SDKD…ETHK). The span at 722–733 (ERRHRHRKRRRT) shows a compositional bias: basic residues.

This Arabidopsis thaliana (Mouse-ear cress) protein is Zinc finger CCCH domain-containing protein 5.